A 285-amino-acid chain; its full sequence is Protein phosphatase 1 regulatory subunit 3C (285 aa).

The PP1-binding motif motif lies at 72-75 (KVVF). The CBM21 domain maps to 133–241 (RKRLMKNSVC…NNNGKNYALV (109 aa)).

In terms of assembly, interacts with PPP1CC catalytic subunit of PP1 and associates with glycogen. Forms complexes with glycogen phosphorylase, glycogen synthase and phosphorylase kinase which is necessary for its regulation of PP1 activity. Ubiquitously expressed in the examined tissues including brain, muscle, liver and spleen under normoxic condition. Its expression is higher in insulin sensitive tissues (liver and muscle) than in the brain and spleen. Significantly increased expression in the liver and muscle under short-term (1-12 hours) hypoxia exposure. Significantly increased expression after long-term (natural) hypoxia exposure in liver and spleen. No significant differences in expression in brain for any time periods.

Functionally, acts as a glycogen-targeting subunit for PP1 and regulates its activity. Activates glycogen synthase, reduces glycogen phosphorylase activity and limits glycogen breakdown. The sequence is that of Protein phosphatase 1 regulatory subunit 3C from Clarias batrachus (Walking catfish).